The following is a 382-amino-acid chain: Dual-specificity RNA methyltransferase RlmN (382 aa).

The active-site Proton acceptor is Glu-96. One can recognise a Radical SAM core domain in the interval 102–342 (QGKRGTLCVS…VRTTRGEDID (241 aa)). Cys-109 and Cys-345 are joined by a disulfide. Positions 116, 120, and 123 each coordinate [4Fe-4S] cluster. Residues 170-171 (GE), Ser-202, 224-226 (SLH), and Asn-302 each bind S-adenosyl-L-methionine. Cys-345 (S-methylcysteine intermediate) is an active-site residue.

Belongs to the radical SAM superfamily. RlmN family. The cofactor is [4Fe-4S] cluster.

The protein resides in the cytoplasm. The catalysed reaction is adenosine(2503) in 23S rRNA + 2 reduced [2Fe-2S]-[ferredoxin] + 2 S-adenosyl-L-methionine = 2-methyladenosine(2503) in 23S rRNA + 5'-deoxyadenosine + L-methionine + 2 oxidized [2Fe-2S]-[ferredoxin] + S-adenosyl-L-homocysteine. It catalyses the reaction adenosine(37) in tRNA + 2 reduced [2Fe-2S]-[ferredoxin] + 2 S-adenosyl-L-methionine = 2-methyladenosine(37) in tRNA + 5'-deoxyadenosine + L-methionine + 2 oxidized [2Fe-2S]-[ferredoxin] + S-adenosyl-L-homocysteine. Specifically methylates position 2 of adenine 2503 in 23S rRNA and position 2 of adenine 37 in tRNAs. m2A2503 modification seems to play a crucial role in the proofreading step occurring at the peptidyl transferase center and thus would serve to optimize ribosomal fidelity. This is Dual-specificity RNA methyltransferase RlmN from Pseudomonas savastanoi pv. phaseolicola (strain 1448A / Race 6) (Pseudomonas syringae pv. phaseolicola (strain 1448A / Race 6)).